The chain runs to 281 residues: Ribosomal RNA small subunit methyltransferase A (281 aa).

6 residues coordinate S-adenosyl-L-methionine: asparagine 21, leucine 23, glycine 48, glutamate 69, aspartate 92, and asparagine 113.

The protein belongs to the class I-like SAM-binding methyltransferase superfamily. rRNA adenine N(6)-methyltransferase family. RsmA subfamily.

The protein localises to the cytoplasm. It catalyses the reaction adenosine(1518)/adenosine(1519) in 16S rRNA + 4 S-adenosyl-L-methionine = N(6)-dimethyladenosine(1518)/N(6)-dimethyladenosine(1519) in 16S rRNA + 4 S-adenosyl-L-homocysteine + 4 H(+). Its function is as follows. Specifically dimethylates two adjacent adenosines (A1518 and A1519) in the loop of a conserved hairpin near the 3'-end of 16S rRNA in the 30S particle. May play a critical role in biogenesis of 30S subunits. In Ralstonia nicotianae (strain ATCC BAA-1114 / GMI1000) (Ralstonia solanacearum), this protein is Ribosomal RNA small subunit methyltransferase A.